Reading from the N-terminus, the 308-residue chain is UPF0282 protein PYRAB09800 (308 aa).

This sequence belongs to the UPF0282 family.

This is UPF0282 protein PYRAB09800 from Pyrococcus abyssi (strain GE5 / Orsay).